Here is an 849-residue protein sequence, read N- to C-terminus: MFSKNKHNTKFIVIACVIVVLILILFCFDFQNIQEIIETINQLTNNQNPSKNTASEMSGMRRKIIFFIFNFFGKIILASFIISFLLHIKKNAQIKRLKNKLSLWSKLSFHVSQIGEEVLNELPIGIVLIDISSQEIQWLNPYASFILKNPEINSPLTQINENMAQLISTSDTIPKTIITLKNQKFECFYKKDLSVFYLFDATEKEQIKHLFLQKTLAIAMIAFDNLAESLIRYDLSEQSQIQGEYLSALSDYIEPYESYLKQLIDDRFLLLLNRQNLDKMLENKFSILDTIRNISHKYQLKVTLSMGIACWNLSYEKLATYSQNAIELAQKRGGDQVVVNIENEKIKYFGAKIASLSKQSKVHARINAQNLVDILKKNPHCFIMGHTHTDLDALGSVIAFYKIAATIHPENNNYIILDEEKLDKSLIPVYHQLIKTESKKTLNIITTQQASKMIKDNSLIAVLDTQTKDMLNSPELLSLTPNIVVVDHHRATEEIIPSIFSYVESSASSTVELLVEVMGFLEKEVHITAFEASIMYAGILIDTNAFIYRTSSRTFEVASKLKDLGADAIEVKSWLRKDFDKVLEINKLISEMEIFMDRFAIIQSSEIYENRSFLAQVAESVLNIQNVDAAFMIAKIADNKIAISARSYNEINVQTIMEQMEGGGHLNSAATQLEGTNIKTVTDTLKHFLKLEYEKGEKNMEIILLTDISNKGKKHEIIKVNNGYGNFLIQNKKALLADKANLAVIKQTQILEQEQKRNHELLMQKLKQEIDDKKITLDIQLGPKGKIYGKITLKQISEEFLKVHNITLDRKKISLESEIIAIGIYPVDVFLTDQIKATFFLNVTERKSK.

Residues 1-680 (MFSKNKHNTK…TQLEGTNIKT (680 aa)) are unknown. 2 helical membrane-spanning segments follow: residues 11-31 (FIVIACVIVVLILILFCFDFQ) and 64-84 (IIFFIFNFFGKIILASFIISF). The GGDEF domain occupies 214–342 (KTLAIAMIAF…GGDQVVVNIE (129 aa)). The large ribosomal subunit protein bL9 stretch occupies residues 681-849 (VTDTLKHFLK…FLNVTERKSK (169 aa)).

Belongs to the bacterial ribosomal protein bL9 family.

Its subcellular location is the cell membrane. Its function is as follows. Binds to the 23S rRNA. The chain is Membrane protein-large ribosomal subunit bL9 fusion protein from Aster yellows witches'-broom phytoplasma (strain AYWB).